Consider the following 299-residue polypeptide: Oxygen-dependent coproporphyrinogen-III oxidase (299 aa).

S92 provides a ligand contact to substrate. H96 and H106 together coordinate a divalent metal cation. H106 (proton donor) is an active-site residue. 108 to 110 (NVR) contacts substrate. The a divalent metal cation site is built by H145 and H175. An important for dimerization region spans residues 239–274 (YVEFNLVYDRGTLFGLQSGGRAESILMSLPPRVRWE). 257–259 (GGR) is a substrate binding site.

The protein belongs to the aerobic coproporphyrinogen-III oxidase family. In terms of assembly, homodimer. It depends on a divalent metal cation as a cofactor.

The protein localises to the cytoplasm. The enzyme catalyses coproporphyrinogen III + O2 + 2 H(+) = protoporphyrinogen IX + 2 CO2 + 2 H2O. Its pathway is porphyrin-containing compound metabolism; protoporphyrin-IX biosynthesis; protoporphyrinogen-IX from coproporphyrinogen-III (O2 route): step 1/1. In terms of biological role, involved in the heme biosynthesis. Catalyzes the aerobic oxidative decarboxylation of propionate groups of rings A and B of coproporphyrinogen-III to yield the vinyl groups in protoporphyrinogen-IX. The protein is Oxygen-dependent coproporphyrinogen-III oxidase of Xanthomonas axonopodis pv. citri (strain 306).